The sequence spans 330 residues: MNTQPTRAIETSGLVKVYNGTRAVDGLDLNVPAGLVYGILGPNGAGKSTTIRMLATLLRPDGGTARVFGHDVTSEPDTVRRRISVTGQYASVDEGLTGTENLVMMGRLQGYSWARARERAAELIDGFGLGDARDRLLKTYSGGMRRRLDIAASIVVTPDLLFLDEPTTGLDPRSRNQVWDIVRALVDAGTTVLLTTQYLDEADQLADRIAVIDHGRVIAEGTTGELKSSLGSNVLRLRLHDAQSRAEAERLLSAELGVTIHRDSDPTALSARIDDPRQGMRALAELSRTHLEVRSFSLGQSSLDEVFLALTGHPADDRSTEEAAEEEKVA.

The ABC transporter domain occupies 9 to 239 (IETSGLVKVY…LGSNVLRLRL (231 aa)). Residue 41–48 (GPNGAGKS) participates in ATP binding.

Belongs to the ABC transporter superfamily. Drug exporter-1 (DrugE1) (TC 3.A.1.105) family. As to quaternary structure, the complex is composed of two ATP-binding proteins (DrrA) and two transmembrane proteins (DrrB).

It localises to the cell membrane. The enzyme catalyses daunorubicin(in) + ATP + H2O = daunorubicin(out) + ADP + phosphate + H(+). Part of the ABC transporter complex DrrAB involved in daunorubicin and doxorubicin resistance. Responsible for energy coupling to the transport system. Binds ATP or GTP. This Streptomyces peucetius protein is Daunorubicin/doxorubicin resistance ATP-binding protein DrrA (drrA).